Reading from the N-terminus, the 317-residue chain is Beta-ketoacyl-[acyl-carrier-protein] synthase III (317 aa).

Residues cysteine 112 and histidine 244 contribute to the active site. The interval 245 to 249 (QANLR) is ACP-binding. Residue asparagine 274 is part of the active site.

It belongs to the thiolase-like superfamily. FabH family. As to quaternary structure, homodimer.

Its subcellular location is the cytoplasm. It catalyses the reaction malonyl-[ACP] + acetyl-CoA + H(+) = 3-oxobutanoyl-[ACP] + CO2 + CoA. Its pathway is lipid metabolism; fatty acid biosynthesis. In terms of biological role, catalyzes the condensation reaction of fatty acid synthesis by the addition to an acyl acceptor of two carbons from malonyl-ACP. Catalyzes the first condensation reaction which initiates fatty acid synthesis and may therefore play a role in governing the total rate of fatty acid production. Possesses both acetoacetyl-ACP synthase and acetyl transacylase activities. Its substrate specificity determines the biosynthesis of branched-chain and/or straight-chain of fatty acids. This Blochmanniella pennsylvanica (strain BPEN) protein is Beta-ketoacyl-[acyl-carrier-protein] synthase III.